The sequence spans 602 residues: MSSMRTHYCGLVTEQFSGQEVALTGWVQRRRDHGGVIFIDLRDREGLVQVVCDPDRPEMFKAAEEIRNEFCIRVTGKVRPRPAGTENANLTSGKIEVLCHELTVLNPSVTPPFQLDDDNLSETTRLTHRVLDLRRPQMQYNLRLRYKVAMEVRKFLDAQGFIDIETPMLGKSTPEGARDYLVPSRVNPGHFFALPQSPQIFKQMLMVSGFDRYYQITKCFRDEDLRADRQPEFTQIDCETSFLTEQEIRDLFEDMMRTVFKNAIDVDLDAKFPVMEFREAMARFGSDKPDLRVKLEFTELTEVMKDVDFKVFSGPANSDNGRVVGLRVPGGGAISRGEIDAYTQFVGIYGAKGLAWIKVNEVAKGRDGLQSPIVKNLHDAAIAEILKRTGAQDGDIIFFGADKAKVVNDSIGALRLKIGHSDFGKANGLFEDAWKPLWVVDFPMFEYDEEDARWVAMHHPFTSPKDEHLEYLETDPGKCLAKAYDMVLNGWEMGGGSVRIFRSDIQSKVFRALKINDEEARAKFGYLLDALQYGAPPHGGLAFGLDRIVTMMAGADSIRDVIAFPKTQRAQDLLTQAPSSVDEKQLRELHIRLRTAEPKPNA.

Glu-175 lines the L-aspartate pocket. The tract at residues 199-202 (QIFK) is aspartate. Arg-221 contacts L-aspartate. Residues 221 to 223 (RDE) and Gln-230 contribute to the ATP site. His-458 lines the L-aspartate pocket. Residue Glu-492 coordinates ATP. Residue Arg-499 participates in L-aspartate binding. 544–547 (GLDR) contributes to the ATP binding site.

Belongs to the class-II aminoacyl-tRNA synthetase family. Type 1 subfamily. Homodimer.

The protein resides in the cytoplasm. The enzyme catalyses tRNA(Asx) + L-aspartate + ATP = L-aspartyl-tRNA(Asx) + AMP + diphosphate. In terms of biological role, aspartyl-tRNA synthetase with relaxed tRNA specificity since it is able to aspartylate not only its cognate tRNA(Asp) but also tRNA(Asn). Reaction proceeds in two steps: L-aspartate is first activated by ATP to form Asp-AMP and then transferred to the acceptor end of tRNA(Asp/Asn). In Cupriavidus taiwanensis (strain DSM 17343 / BCRC 17206 / CCUG 44338 / CIP 107171 / LMG 19424 / R1) (Ralstonia taiwanensis (strain LMG 19424)), this protein is Aspartate--tRNA(Asp/Asn) ligase.